The following is a 278-amino-acid chain: 3-methyl-2-oxobutanoate hydroxymethyltransferase (278 aa).

The Mg(2+) site is built by aspartate 43 and aspartate 82. 3-methyl-2-oxobutanoate is bound by residues 43–44 (DS), aspartate 82, and lysine 112. Glutamate 114 is a Mg(2+) binding site. Glutamate 181 acts as the Proton acceptor in catalysis.

This sequence belongs to the PanB family. Homodecamer; pentamer of dimers. It depends on Mg(2+) as a cofactor.

The protein resides in the cytoplasm. It carries out the reaction 3-methyl-2-oxobutanoate + (6R)-5,10-methylene-5,6,7,8-tetrahydrofolate + H2O = 2-dehydropantoate + (6S)-5,6,7,8-tetrahydrofolate. Its pathway is cofactor biosynthesis; (R)-pantothenate biosynthesis; (R)-pantoate from 3-methyl-2-oxobutanoate: step 1/2. In terms of biological role, catalyzes the reversible reaction in which hydroxymethyl group from 5,10-methylenetetrahydrofolate is transferred onto alpha-ketoisovalerate to form ketopantoate. The polypeptide is 3-methyl-2-oxobutanoate hydroxymethyltransferase (Desulfitobacterium hafniense (strain DSM 10664 / DCB-2)).